The sequence spans 175 residues: Peptide deformylase (175 aa).

Fe cation-binding residues include C96 and H138. E139 is a catalytic residue. H142 is a binding site for Fe cation.

The protein belongs to the polypeptide deformylase family. Requires Fe(2+) as cofactor.

The catalysed reaction is N-terminal N-formyl-L-methionyl-[peptide] + H2O = N-terminal L-methionyl-[peptide] + formate. Its function is as follows. Removes the formyl group from the N-terminal Met of newly synthesized proteins. Requires at least a dipeptide for an efficient rate of reaction. N-terminal L-methionine is a prerequisite for activity but the enzyme has broad specificity at other positions. The polypeptide is Peptide deformylase (Helicobacter pylori (strain Shi470)).